The primary structure comprises 53 residues: U13-myrmicitoxin-Tb1a (53 aa).

The first 23 residues, 1–23, serve as a signal peptide directing secretion; it reads MKLIYIFSLVAVIAVTMIPGIMG. A propeptide spanning residues 24-29 is cleaved from the precursor; the sequence is EAEAEG. Lysine 52 carries the lysine amide modification.

In terms of tissue distribution, expressed by the venom gland.

The protein resides in the secreted. In vivo, this neurotoxin paralyzes about 70% of blowflies (L.caesar) one hour after intrathoracic injection, when tested at high doses (45 nmol/g). The sequence is that of U13-myrmicitoxin-Tb1a from Tetramorium bicarinatum (Tramp ant).